Consider the following 991-residue polypeptide: Phosphate metabolism protein 7 (991 aa).

Residues 1–9 (MADSSSTSA) are Extracellular-facing. A helical transmembrane segment spans residues 10-30 (FISTLIIYGLTAVVFVWLFLL). Over 31 to 91 (LRPKNRRVYE…TSVDGYFLLR (61 aa)) the chain is Cytoplasmic. Residues 92 to 112 (YIGIVGSLSFVGCLLLLPILL) form a helical membrane-spanning segment. The Extracellular portion of the chain corresponds to 113–138 (PVNATNGNNLQGFELLSFSNVTNKNR). 2 N-linked (GlcNAc...) asparagine glycosylation sites follow: N115 and N132. Residues 139–159 (FYAHVFLSWIFFGLFTYVIYK) form a helical membrane-spanning segment. Residues 160-388 (ELYYYVVFRH…ERHSRRAVAN (229 aa)) are Cytoplasmic-facing. Residues 389–409 (TIMVLLIIFWAFPVAVVGIIS) form a helical membrane-spanning segment. Residues 410–437 (NVNFLTDKVPFLRFINNMPTFLMGVITG) are Extracellular-facing. Residues 438-458 (LLPTIALVVLMSLVPPFIVML) traverse the membrane as a helical segment. Topologically, residues 459–471 (GKLSGCVTRQETD) are cytoplasmic. Residues 472–492 (LYSQAWYYAFAVIQIFLVVTA) traverse the membrane as a helical segment. Residues 493 to 523 (TSSASSTVDSIIDRPRSAMTLLANNLPKASN) are Extracellular-facing. The chain crosses the membrane as a helical span at residues 524–544 (FYIMYFILKGLTGPTWTILQA). Residues 545–582 (VNLLLSKVLGRVLDSTPRQKWNRYNTLATPRMGIVYPG) lie on the Cytoplasmic side of the membrane. The helical transmembrane segment at 583-603 (IEILVCIYICYSIIAPILLFF) threads the bilayer. S604 is a topological domain (extracellular). The chain crosses the membrane as a helical span at residues 605–625 (TVMLTLLYVAYLYNLNYVFGF). The Cytoplasmic segment spans residues 626–637 (SFDLKGRNYPRA). The chain crosses the membrane as a helical span at residues 638-658 (LFQIFVGIYLSEVCLLGLFIM). The Extracellular segment spans residues 659–661 (AKT). A helical transmembrane segment spans residues 662–682 (WGPLVLEVFWIVVTALAHIYM). At 683-991 (KRKFIPLFDA…PPDYEPEAKK (309 aa)) the chain is on the cytoplasmic side. Residues 749-787 (KANLIPDNDGSSENGTPSNPFESGSERASLSGSNAESDS) form a disordered region. Positions 757 to 785 (DGSSENGTPSNPFESGSERASLSGSNAES) are enriched in polar residues.

It belongs to the CSC1 (TC 1.A.17) family.

It localises to the cell membrane. Acts as an osmosensitive calcium-permeable cation channel. The sequence is that of Phosphate metabolism protein 7 (PHM7) from Saccharomyces cerevisiae (strain ATCC 204508 / S288c) (Baker's yeast).